We begin with the raw amino-acid sequence, 148 residues long: UPF0178 protein SH2212 (148 aa).

It belongs to the UPF0178 family.

This is UPF0178 protein SH2212 from Staphylococcus haemolyticus (strain JCSC1435).